The chain runs to 1182 residues: DNA-directed RNA polymerase subunit beta (1182 aa).

This sequence belongs to the RNA polymerase beta chain family. As to quaternary structure, the RNAP catalytic core consists of 2 alpha, 1 beta, 1 beta' and 1 omega subunit. When a sigma factor is associated with the core the holoenzyme is formed, which can initiate transcription.

It catalyses the reaction RNA(n) + a ribonucleoside 5'-triphosphate = RNA(n+1) + diphosphate. Functionally, DNA-dependent RNA polymerase catalyzes the transcription of DNA into RNA using the four ribonucleoside triphosphates as substrates. This is DNA-directed RNA polymerase subunit beta from Fervidobacterium nodosum (strain ATCC 35602 / DSM 5306 / Rt17-B1).